Reading from the N-terminus, the 595-residue chain is Outer dynein arm-docking complex subunit 3 (595 aa).

Residues 1–69 are disordered; that stretch reads MTSPLCRAAS…RGAGKPSVHS (69 aa). Coiled coils occupy residues 94–327 and 385–473; these read WNIK…REHL and FAQL…ASKL.

Component of the outer dynein arm-docking complex along with ODAD1, ODAD2, ODAD4 and CLXN. Interacts with ODAD1. Interacts with PIERCE1 and PIERCE2; the interactions link the outer dynein arms docking complex (ODA-DC) to the internal microtubule inner proteins (MIP) in cilium axoneme.

The protein resides in the cytoplasm. Its subcellular location is the cytoskeleton. It localises to the cilium basal body. The protein localises to the microtubule organizing center. It is found in the centrosome. The protein resides in the centriole. Its subcellular location is the cilium axoneme. In terms of biological role, component of the outer dynein arm-docking complex (ODA-DC) that mediates outer dynein arms (ODA) binding onto the doublet microtubule. Involved in mediating assembly of both ODAs and their axonemal docking complex onto ciliary microtubules. In Homo sapiens (Human), this protein is Outer dynein arm-docking complex subunit 3.